The primary structure comprises 243 residues: Peptidyl-tRNA hydrolase (243 aa).

Tyr-14 contacts tRNA. Catalysis depends on His-19, which acts as the Proton acceptor. The tRNA site is built by Phe-64, Asn-66, and Asn-112. Positions 188-243 (GGKAEEEKPRKDNKTTEKKPAGQSHIHQARNHNQPKVLTTGPMADILKKMFGNKGE) are disordered. Residues 190–207 (KAEEEKPRKDNKTTEKKP) are compositionally biased toward basic and acidic residues.

It belongs to the PTH family. As to quaternary structure, monomer.

The protein localises to the cytoplasm. It catalyses the reaction an N-acyl-L-alpha-aminoacyl-tRNA + H2O = an N-acyl-L-amino acid + a tRNA + H(+). Hydrolyzes ribosome-free peptidyl-tRNAs (with 1 or more amino acids incorporated), which drop off the ribosome during protein synthesis, or as a result of ribosome stalling. Functionally, catalyzes the release of premature peptidyl moieties from peptidyl-tRNA molecules trapped in stalled 50S ribosomal subunits, and thus maintains levels of free tRNAs and 50S ribosomes. The chain is Peptidyl-tRNA hydrolase from Rhizobium leguminosarum bv. trifolii (strain WSM2304).